An 87-amino-acid polypeptide reads, in one-letter code: Prolactin-releasing peptide (87 aa).

A signal peptide spans 1 to 22 (MKVLRAWLLCLLMLGLALRGAA). At Phe-53 the chain carries Phenylalanine amide. The propeptide occupies 58–87 (ATLGDVPKPGLRPRLTCFPLEGGAMSSQDG).

Medulla oblongata and hypothalamus.

It localises to the secreted. Stimulates prolactin (PRL) release and regulates the expression of prolactin through its receptor GPR10. May stimulate lactotrophs directly to secrete PRL. The protein is Prolactin-releasing peptide (PRLH) of Homo sapiens (Human).